Reading from the N-terminus, the 224-residue chain is Cytochrome c biogenesis ATP-binding export protein CcmA (224 aa).

In terms of domain architecture, ABC transporter spans 1 to 220 (MQNAEAAPAL…EYAHAEVVGA (220 aa)). 40–47 (GANGSGKT) serves as a coordination point for ATP.

Belongs to the ABC transporter superfamily. CcmA exporter (TC 3.A.1.107) family. The complex is composed of two ATP-binding proteins (CcmA) and two transmembrane proteins (CcmB).

It localises to the cell inner membrane. It catalyses the reaction heme b(in) + ATP + H2O = heme b(out) + ADP + phosphate + H(+). Its function is as follows. Part of the ABC transporter complex CcmAB involved in the biogenesis of c-type cytochromes; once thought to export heme, this seems not to be the case, but its exact role is uncertain. Responsible for energy coupling to the transport system. This chain is Cytochrome c biogenesis ATP-binding export protein CcmA, found in Bordetella bronchiseptica (strain ATCC BAA-588 / NCTC 13252 / RB50) (Alcaligenes bronchisepticus).